A 341-amino-acid chain; its full sequence is MRPILLAGHERALTQIKYNPDGDLIFSVSKDQQICVWFAHNGERLGTYRGHQGAIWTIDVDPTSTILASGSADNTIRLWDIKTGKCLKTWDFPTAVKRVEFNEDGTKLLGVTEKRMGHLGTIVVLDIKIDVEAEQSDEKVMTIVCDESKATVAGWSYLSKYIIAGHEDGSVSQYDGKTGDLLYNIPIHELNQPITDLQWSQDRTYFITASKDKTSKLISSKDLEVLKSYTADTPLNSAAITPKKDFVILGGGQAAMDVTTTAARQGKFEARFYHKIFEDEIGRVRGHFGPLNTVAADPTGKGYASGGEDGYVRVHAFDKGYYDFLYEVERERQNRLAAASA.

WD repeat units follow at residues 8 to 49, 50 to 91, 135 to 184, 189 to 228, and 286 to 325; these read GHER…GTYR, GHQG…KTWD, QSDE…LLYN, ELNQ…VLKS, and GHFG…YDFL.

It belongs to the eIF-3 subunit I family. In terms of assembly, component of the eukaryotic translation initiation factor 3 (eIF-3) complex.

It is found in the cytoplasm. Its function is as follows. Component of the eukaryotic translation initiation factor 3 (eIF-3) complex, which is involved in protein synthesis of a specialized repertoire of mRNAs and, together with other initiation factors, stimulates binding of mRNA and methionyl-tRNAi to the 40S ribosome. The eIF-3 complex specifically targets and initiates translation of a subset of mRNAs involved in cell proliferation. This Chaetomium globosum (strain ATCC 6205 / CBS 148.51 / DSM 1962 / NBRC 6347 / NRRL 1970) (Soil fungus) protein is Eukaryotic translation initiation factor 3 subunit I.